We begin with the raw amino-acid sequence, 460 residues long: Argininosuccinate lyase (460 aa).

Belongs to the lyase 1 family. Argininosuccinate lyase subfamily.

Its subcellular location is the cytoplasm. The catalysed reaction is 2-(N(omega)-L-arginino)succinate = fumarate + L-arginine. It functions in the pathway amino-acid biosynthesis; L-arginine biosynthesis; L-arginine from L-ornithine and carbamoyl phosphate: step 3/3. This chain is Argininosuccinate lyase, found in Sulfurimonas denitrificans (strain ATCC 33889 / DSM 1251) (Thiomicrospira denitrificans (strain ATCC 33889 / DSM 1251)).